Consider the following 233-residue polypeptide: tRNA (guanine-N(7)-)-methyltransferase (233 aa).

S-adenosyl-L-methionine contacts are provided by E62, E87, D116, and D138. D138 is an active-site residue. Substrate is bound by residues K142, D174, and 212 to 215 (TRYE).

It belongs to the class I-like SAM-binding methyltransferase superfamily. TrmB family.

It carries out the reaction guanosine(46) in tRNA + S-adenosyl-L-methionine = N(7)-methylguanosine(46) in tRNA + S-adenosyl-L-homocysteine. It functions in the pathway tRNA modification; N(7)-methylguanine-tRNA biosynthesis. Its function is as follows. Catalyzes the formation of N(7)-methylguanine at position 46 (m7G46) in tRNA. This is tRNA (guanine-N(7)-)-methyltransferase from Bartonella quintana (strain Toulouse) (Rochalimaea quintana).